Here is a 235-residue protein sequence, read N- to C-terminus: Nucleoprotein (235 aa).

Positions 17, 18, 47, 50, 75, 76, 81, 94, 124, 126, 129, 167, 177, 179, 180, 183, 184, and 185 each coordinate RNA.

The protein belongs to the orthobunyavirus nucleocapsid protein family. As to quaternary structure, homotetramer. Binds the viral genomic RNA. Interacts with host PABP1.

The protein localises to the virion. Its function is as follows. Encapsidates the genome protecting it from nucleases. The encapsidated genomic RNA is termed the nucleocapsid (NC) and serves as template for transcription and replication. The NC have a helical organization. Seems to participate in the nuclear relocalization of host PABP1, thereby inhibiting host cellular translation. The sequence is that of Nucleoprotein (N) from Cervidae (Deer).